The primary structure comprises 24 residues: Brevinin-1Lb (24 aa).

Residues Cys18 and Cys24 are joined by a disulfide bond.

As to expression, expressed by the skin glands.

The protein localises to the secreted. Antibacterial activity against Gram-positive bacterium S.aureus and Gram-negative bacterium E.coli. In Rana luteiventris (Columbia spotted frog), this protein is Brevinin-1Lb.